The following is a 340-amino-acid chain: Anthranilate phosphoribosyltransferase (340 aa).

5-phospho-alpha-D-ribose 1-diphosphate is bound by residues Gly-80, 83 to 84, Thr-88, 90 to 93, 108 to 116, and Ser-120; these read GD, NIST, and KHGNRAMSS. Gly-80 provides a ligand contact to anthranilate. Ser-92 lines the Mg(2+) pocket. Asn-111 provides a ligand contact to anthranilate. An anthranilate-binding site is contributed by Arg-166. Mg(2+) contacts are provided by Asp-225 and Glu-226.

It belongs to the anthranilate phosphoribosyltransferase family. As to quaternary structure, homodimer. Mg(2+) serves as cofactor.

It catalyses the reaction N-(5-phospho-beta-D-ribosyl)anthranilate + diphosphate = 5-phospho-alpha-D-ribose 1-diphosphate + anthranilate. It functions in the pathway amino-acid biosynthesis; L-tryptophan biosynthesis; L-tryptophan from chorismate: step 2/5. Functionally, catalyzes the transfer of the phosphoribosyl group of 5-phosphorylribose-1-pyrophosphate (PRPP) to anthranilate to yield N-(5'-phosphoribosyl)-anthranilate (PRA). This chain is Anthranilate phosphoribosyltransferase, found in Roseiflexus castenholzii (strain DSM 13941 / HLO8).